The primary structure comprises 60 residues: SDDKCQGRPMYGCREDDDSVFGWTYDSNHGQCWKGSYCKHRRQPSNYFASQQECRNTCGA.

Positions Arg-14 to Asp-16 match the Cell attachment site; atypical motif.

Expressed in salivary glands.

The protein localises to the secreted. In terms of biological role, tick salivary platelet aggregation inhibitor that plays an important part in the anti-hemostatic strategy of ticks. Inhibits fibrinogen interaction with platelets. Acts by binding (in a divalent metal ion dependent manner) to the glycoprotein IIb-IIIa receptor (ITGA2B/ITGB3) on the platelet surface and inhibits aggregation induced by ADP (IC(50)=99-104 nM), thrombin, collagen (IC(50)=64 nM) platelet-activating factor and collagen. Interacts to unstimulated platelets (Kd=42.5 nM) and to ADP-stimulated platelets (Kd=39.4 nM). In contrast to many disintegrins which only interact with the beta-3 subunit, interacts with the two subunits (alpha-IIb and beta-3). Under flow conditions, reduces and delays platelet adhesion, aggregation, and fibrin formation. The polypeptide is Disagregin (Ornithodoros moubata (Soft tick)).